A 297-amino-acid chain; its full sequence is N-acetylmuramoyl-L-alanine amidase XlyA (297 aa).

The first 44 residues, 1–44 (MVNIIQDFIPVGANNRPGYAMTPLYITVHNTANTAVGADAAAHA), serve as a signal peptide directing secretion. Residues 45 to 140 (RYLKNPDTTT…KYWSGKECPR (96 aa)) form the N-acetylmuramoyl-L-alanine amidase domain. Residues 159–203 (QTYVVKQGDTLTSIARAFGVTVAQLQEWNNIEDPNLIRVGQVLIV) enclose the LysM domain.

This sequence belongs to the N-acetylmuramoyl-L-alanine amidase 2 family.

The protein localises to the secreted. It carries out the reaction Hydrolyzes the link between N-acetylmuramoyl residues and L-amino acid residues in certain cell-wall glycopeptides.. Its function is as follows. Autolysins are involved in some important biological processes such as cell separation, cell-wall turnover, competence for genetic transformation, formation of the flagella and sporulation. This is N-acetylmuramoyl-L-alanine amidase XlyA (xlyA) from Bacillus subtilis (strain 168).